The primary structure comprises 276 residues: Tryptophan synthase alpha chain (276 aa).

Residues Glu-46 and Glu-57 each act as proton acceptor in the active site.

It belongs to the TrpA family. In terms of assembly, tetramer of two alpha and two beta chains.

The catalysed reaction is (1S,2R)-1-C-(indol-3-yl)glycerol 3-phosphate + L-serine = D-glyceraldehyde 3-phosphate + L-tryptophan + H2O. It participates in amino-acid biosynthesis; L-tryptophan biosynthesis; L-tryptophan from chorismate: step 5/5. The alpha subunit is responsible for the aldol cleavage of indoleglycerol phosphate to indole and glyceraldehyde 3-phosphate. The sequence is that of Tryptophan synthase alpha chain from Halobacterium salinarum (strain ATCC 29341 / DSM 671 / R1).